A 363-amino-acid chain; its full sequence is Protein-glutamate methylesterase/protein-glutamine glutaminase 2 (363 aa).

The region spanning 6–123 (RVLIVDDSAS…AQFLLESKIH (118 aa)) is the Response regulatory domain. A 4-aspartylphosphate modification is found at aspartate 57. The 192-residue stretch at 172–363 (ARTTESVICI…AMEILRAGNR (192 aa)) folds into the CheB-type methylesterase domain. Residues serine 184, histidine 210, and aspartate 306 contribute to the active site.

It belongs to the CheB family. In terms of processing, phosphorylated by CheA. Phosphorylation of the N-terminal regulatory domain activates the methylesterase activity.

It localises to the cytoplasm. The enzyme catalyses [protein]-L-glutamate 5-O-methyl ester + H2O = L-glutamyl-[protein] + methanol + H(+). It catalyses the reaction L-glutaminyl-[protein] + H2O = L-glutamyl-[protein] + NH4(+). Its function is as follows. Involved in chemotaxis. Part of a chemotaxis signal transduction system that modulates chemotaxis in response to various stimuli. Catalyzes the demethylation of specific methylglutamate residues introduced into the chemoreceptors (methyl-accepting chemotaxis proteins or MCP) by CheR. Also mediates the irreversible deamidation of specific glutamine residues to glutamic acid. This Rhodospirillum rubrum (strain ATCC 11170 / ATH 1.1.1 / DSM 467 / LMG 4362 / NCIMB 8255 / S1) protein is Protein-glutamate methylesterase/protein-glutamine glutaminase 2.